Consider the following 278-residue polypeptide: HTH-type transcriptional activator RhaS (278 aa).

Residues 174 to 272 form the HTH araC/xylS-type domain; that stretch reads NHLIAWLEDH…GWSPREIRQG (99 aa). 2 consecutive DNA-binding regions (H-T-H motif) follow at residues 191–212 and 239–262; these read EAIA…KQHT and VTHI…RREF.

In terms of assembly, binds DNA as a dimer.

It localises to the cytoplasm. Its function is as follows. Activates expression of the rhaBAD and rhaT operons. In Escherichia fergusonii (strain ATCC 35469 / DSM 13698 / CCUG 18766 / IAM 14443 / JCM 21226 / LMG 7866 / NBRC 102419 / NCTC 12128 / CDC 0568-73), this protein is HTH-type transcriptional activator RhaS.